Reading from the N-terminus, the 249-residue chain is Probable transcriptional regulatory protein GOX1679 (249 aa).

It belongs to the TACO1 family.

It localises to the cytoplasm. In Gluconobacter oxydans (strain 621H) (Gluconobacter suboxydans), this protein is Probable transcriptional regulatory protein GOX1679.